Here is a 195-residue protein sequence, read N- to C-terminus: Putative NADH dehydrogenase/NAD(P)H nitroreductase Caul_0018 (195 aa).

It belongs to the nitroreductase family. HadB/RutE subfamily. Requires FMN as cofactor.

The chain is Putative NADH dehydrogenase/NAD(P)H nitroreductase Caul_0018 from Caulobacter sp. (strain K31).